Here is a 619-residue protein sequence, read N- to C-terminus: Glucokinase regulatory protein (619 aa).

SIS domains are found at residues valine 90–asparagine 283 and threonine 319–lysine 498. Cysteine 107 to threonine 109 lines the keto-D-fructose 6-phosphate pocket. Residues threonine 109–serine 110, glutamate 153, serine 179–glycine 181, and glutamate 347 contribute to the beta-D-fructose 1-phosphate site. Keto-D-fructose 6-phosphate-binding positions include serine 179–serine 183 and glutamate 347. The interval isoleucine 462–phenylalanine 464 is essential for interaction with GCK. Lysine 513 contributes to the keto-D-fructose 6-phosphate binding site. A beta-D-fructose 1-phosphate-binding site is contributed by lysine 513.

The protein belongs to the GCKR family. As to quaternary structure, interacts (fructose 6-phosphate bound form) with gck.

The protein localises to the nucleus. It is found in the cytoplasm. The protein resides in the mitochondrion. Regulates glucokinase (gck) by forming an inactive complex with this enzyme. The affinity of gckr for gck is modulated by fructose metabolites: gckr with bound fructose 6-phosphate has increased affinity for gck, while gckr with bound fructose 1-phosphate has strongly decreased affinity for gck and does not inhibit gck activity. This chain is Glucokinase regulatory protein, found in Xenopus laevis (African clawed frog).